Consider the following 88-residue polypeptide: UPF0297 protein Ccel_2240 (88 aa).

Belongs to the UPF0297 family.

The polypeptide is UPF0297 protein Ccel_2240 (Ruminiclostridium cellulolyticum (strain ATCC 35319 / DSM 5812 / JCM 6584 / H10) (Clostridium cellulolyticum)).